The chain runs to 621 residues: MSLDISNYPVLAQANTPDELRQLPQAVLPQLADELRGFLLKSVGKSSGHFASGLGTVELTVALHYVYNTPFDRLIWDVGHQAYPHKILTGRRDKMHTIRQKGGIHPFPWREESEYDTFSVGHSGTSISAALAMAVAAEKEQAGRKVVSVIGDGAMTGGMVFEAMNHAGDLHNDMLVVLNDNEMSISENVGALNNHLAQLMSGRFYTTIRESSKKVLEGMPVIKEMAKRTEEHLKGMVVPGTMFEELGFNYIGPIDGHDVDALVETMRNMRNLSGPQILHIMTKKGRGYEPAEKDPIGWHAVPKFDPSTFEKPASKPSNPTFSQVFGKWLCDVAEKDDKVLGITPAMREGSGMVEFSQRFPKQYFDAAIAEQHAVTLGAGFACEGLKPVVAIYSTFLQRGYDQLIHDVALQKLPVLFAIDRGGIVGADGPTHQGAFDLSFMRTVPNMVIMAPSDENECRQMLYTGYCYREGPTAVRYPRGSATGEPQVEEMQALPIGKGLIKRQGQKVAILNFGTLLADVLTAAESIDATVADMRFVKPLDVELVKELASSHDLLVTVEENAIMGGAGSGVLELLQQLKQPMPVLQIGLPDEFIKHGASGEILAELRLDAAGILEQIEEYLK.

Residues H80 and 121-123 each bind thiamine diphosphate; that span reads GHS. D152 contacts Mg(2+). Thiamine diphosphate is bound by residues 153–154, N181, Y288, and E370; that span reads GA. N181 is a Mg(2+) binding site.

This sequence belongs to the transketolase family. DXPS subfamily. As to quaternary structure, homodimer. Mg(2+) serves as cofactor. Requires thiamine diphosphate as cofactor.

It carries out the reaction D-glyceraldehyde 3-phosphate + pyruvate + H(+) = 1-deoxy-D-xylulose 5-phosphate + CO2. It participates in metabolic intermediate biosynthesis; 1-deoxy-D-xylulose 5-phosphate biosynthesis; 1-deoxy-D-xylulose 5-phosphate from D-glyceraldehyde 3-phosphate and pyruvate: step 1/1. Its function is as follows. Catalyzes the acyloin condensation reaction between C atoms 2 and 3 of pyruvate and glyceraldehyde 3-phosphate to yield 1-deoxy-D-xylulose-5-phosphate (DXP). The protein is 1-deoxy-D-xylulose-5-phosphate synthase of Shewanella sediminis (strain HAW-EB3).